A 342-amino-acid chain; its full sequence is Dihydroorotate dehydrogenase (quinone) (342 aa).

Residues 65–69 (AGLDK) and Thr-89 each bind FMN. Position 69 (Lys-69) interacts with substrate. Residue 114–118 (NRMGF) coordinates substrate. Residues Asn-142 and Asn-175 each contribute to the FMN site. Position 175 (Asn-175) interacts with substrate. Ser-178 acts as the Nucleophile in catalysis. Position 180 (Asn-180) interacts with substrate. Residues Lys-220 and Thr-248 each coordinate FMN. 249 to 250 (NT) serves as a coordination point for substrate. FMN-binding positions include Gly-271, Gly-300, and 321–322 (YT).

This sequence belongs to the dihydroorotate dehydrogenase family. Type 2 subfamily. In terms of assembly, monomer. FMN is required as a cofactor.

The protein resides in the cell membrane. It carries out the reaction (S)-dihydroorotate + a quinone = orotate + a quinol. The protein operates within pyrimidine metabolism; UMP biosynthesis via de novo pathway; orotate from (S)-dihydroorotate (quinone route): step 1/1. Its function is as follows. Catalyzes the conversion of dihydroorotate to orotate with quinone as electron acceptor. The protein is Dihydroorotate dehydrogenase (quinone) of Burkholderia pseudomallei (strain 668).